A 346-amino-acid chain; its full sequence is Putative D-xylulose reductase (346 aa).

Positions 39, 64, and 150 each coordinate Zn(2+).

It belongs to the zinc-containing alcohol dehydrogenase family. Zn(2+) serves as cofactor.

It carries out the reaction xylitol + NAD(+) = D-xylulose + NADH + H(+). The protein is Putative D-xylulose reductase of Rhizobium meliloti (strain 1021) (Ensifer meliloti).